We begin with the raw amino-acid sequence, 435 residues long: Adenylosuccinate synthetase (435 aa).

GTP is bound by residues 17-23 (GDEGKGK) and 45-47 (GHT). Aspartate 18 (proton acceptor) is an active-site residue. 2 residues coordinate Mg(2+): aspartate 18 and glycine 45. Residues 18 to 21 (DEGK), 43 to 46 (NAGH), threonine 134, arginine 148, glutamine 229, threonine 244, and arginine 308 contribute to the IMP site. The active-site Proton donor is histidine 46. 304–310 (SVTGRPR) contributes to the substrate binding site. GTP is bound by residues arginine 310, 336–338 (KLD), and 418–420 (STG).

It belongs to the adenylosuccinate synthetase family. As to quaternary structure, homodimer. Mg(2+) serves as cofactor.

Its subcellular location is the cytoplasm. It carries out the reaction IMP + L-aspartate + GTP = N(6)-(1,2-dicarboxyethyl)-AMP + GDP + phosphate + 2 H(+). Its pathway is purine metabolism; AMP biosynthesis via de novo pathway; AMP from IMP: step 1/2. Functionally, plays an important role in the de novo pathway of purine nucleotide biosynthesis. Catalyzes the first committed step in the biosynthesis of AMP from IMP. This chain is Adenylosuccinate synthetase, found in Bordetella parapertussis (strain 12822 / ATCC BAA-587 / NCTC 13253).